The chain runs to 179 residues: Large ribosomal subunit protein uL6 (179 aa).

Belongs to the universal ribosomal protein uL6 family. Part of the 50S ribosomal subunit.

Its function is as follows. This protein binds to the 23S rRNA, and is important in its secondary structure. It is located near the subunit interface in the base of the L7/L12 stalk, and near the tRNA binding site of the peptidyltransferase center. This chain is Large ribosomal subunit protein uL6, found in Mycoplasmopsis pulmonis (strain UAB CTIP) (Mycoplasma pulmonis).